Consider the following 152-residue polypeptide: Transcription elongation factor Spt5 (152 aa).

Residues 99–129 (EGDLVEVISGPFRGMQAQVVRVESTKNEVVL) form the KOW domain.

This sequence belongs to the archaeal Spt5 family. As to quaternary structure, heterodimer composed of Spt4 and Spt5. Interacts with RNA polymerase (RNAP).

Functionally, stimulates transcription elongation. The chain is Transcription elongation factor Spt5 from Sulfolobus acidocaldarius (strain ATCC 33909 / DSM 639 / JCM 8929 / NBRC 15157 / NCIMB 11770).